A 550-amino-acid polypeptide reads, in one-letter code: Complement control protein (550 aa).

An N-terminal signal peptide occupies residues 1 to 19; sequence MAFLRQTLWILWTFTMVIG. Sushi domains lie at 23 to 83, 84 to 150, 151 to 209, and 210 to 268; these read EKCS…TCNK, KSCP…FCEK, EKCH…TCEL, and AGCK…KCVL. 8 disulfides stabilise this stretch: C25–C68, C53–C81, C86–C131, C116–C148, C153–C194, C180–C207, C212–C254, and C240–C266. N-linked (GlcNAc...) asparagine; by host glycans are attached at residues N63 and N111. A glycan (N-linked (GlcNAc...) asparagine; by host) is linked at N197. N-linked (GlcNAc...) asparagine; by host glycans are attached at residues N255, N275, and N299. The tract at residues 269–338 is disordered; it reads EDIDDPNNSN…TSEGFNETTT (70 aa). Composition is skewed to polar residues over residues 288 to 302 and 312 to 321; these read EKPN…NYTE and TAATCDTNCE. N334, N371, N374, and N378 each carry an N-linked (GlcNAc...) asparagine; by host glycan. 2 disordered regions span residues 387–408 and 420–516; these read TPTS…NYNT and IEEG…RPPA. The segment covering 424-440 has biased composition (polar residues); it reads PSNSTTSEKATASTLSH. 4 N-linked (GlcNAc...) asparagine; by host glycosylation sites follow: N426, N445, N455, and N483. The segment covering 450–476 has biased composition (polar residues); it reads IYTTLNKTTQLPSTNKPTNSQAKSSTK. Residues 484 to 495 show a composition bias toward polar residues; it reads KTTSNPAISLTD. A helical transmembrane segment spans residues 528 to 548; sequence IGLLTAVALTCGLITLFHYLF.

Its subcellular location is the host membrane. It localises to the virion membrane. Inhibits the complement component of the host innate immune response. Regulates host C3 convertases, accelerating their decay, and acts as a cofactor for factor I degradation of C4b and C3b. Also binds heparin, and therefore may play two distinct roles when incorporated in virion membranes: immune evasion and host cell binding. This Human herpesvirus 8 type P (isolate GK18) (HHV-8) protein is Complement control protein (ORF4).